An 84-amino-acid polypeptide reads, in one-letter code: Small ribosomal subunit protein bS18A (84 aa).

This sequence belongs to the bacterial ribosomal protein bS18 family. As to quaternary structure, part of the 30S ribosomal subunit. Forms a tight heterodimer with protein bS6.

Binds as a heterodimer with protein bS6 to the central domain of the 16S rRNA, where it helps stabilize the platform of the 30S subunit. The sequence is that of Small ribosomal subunit protein bS18A from Mycobacterium marinum (strain ATCC BAA-535 / M).